Reading from the N-terminus, the 610-residue chain is UvrABC system protein C (610 aa).

The 79-residue stretch at 16–94 (SQPGVYRMYD…IKLYQPRYNV (79 aa)) folds into the GIY-YIG domain. The 36-residue stretch at 204 to 239 (DQVLTQLIARMEKASQDLAFEEAARIRDQIQAVRRV) folds into the UVR domain.

The protein belongs to the UvrC family. In terms of assembly, interacts with UvrB in an incision complex.

The protein resides in the cytoplasm. Functionally, the UvrABC repair system catalyzes the recognition and processing of DNA lesions. UvrC both incises the 5' and 3' sides of the lesion. The N-terminal half is responsible for the 3' incision and the C-terminal half is responsible for the 5' incision. This Salmonella typhimurium (strain LT2 / SGSC1412 / ATCC 700720) protein is UvrABC system protein C.